Here is a 119-residue protein sequence, read N- to C-terminus: Large ribosomal subunit protein bL20 (119 aa).

This sequence belongs to the bacterial ribosomal protein bL20 family.

In terms of biological role, binds directly to 23S ribosomal RNA and is necessary for the in vitro assembly process of the 50S ribosomal subunit. It is not involved in the protein synthesizing functions of that subunit. The polypeptide is Large ribosomal subunit protein bL20 (Methylocella silvestris (strain DSM 15510 / CIP 108128 / LMG 27833 / NCIMB 13906 / BL2)).